The primary structure comprises 880 residues: MKNVTVKSLAVEMQISVDHLVQQFSNVGFHKTARDYVTQQEKETLLAYLKYELSNTPLTLQRKTRSTLNIASTSGRSKSVQVEVRKKHIYIQPVAHDSILTIKENILPNNTQEVKNNAEASPKTKFILTPKQQSKIAKNNIVNNQNNLIKKSRQISEKAILEAKAAELKHQAEEETRRKVEEKARQIAEEARQFAEHNDSIWMTTPELAEDDTIDDNLSNYHYASIVEDENNRKIENERRTRGNKVSKQKTYRLSEFKKNREEARAVGRSSKSQSKRKSSTLMQVFNKPSQVINRDIVIGEMITVAELANKMAVKGSQIIKKLIQLGVMATINQIIDRETAQLVAEDMGHKVILLRENELEESIMKDRKIDSSVDNAESRAPVVTIMGHVDHGKTSLLDYIRSTKVVASEAGGITQHIGAYHVETDRGMITFLDTPGHAAFTAMRARGARTTDIVVLVVAADNGAMPQTIEAIQHAKAAKVPIVVAVNKIDKKEANPENIKNELTKHGIIPEEWGGQNQFVNISAKYGTGINNLLDAILLQAEVLELKAIRNGIASGIVIESFLDKGRGPVATILVREGTLHHGDMILCGLEYGRVRAMRDEQGRHLSTAGPSVPVEILGLSGVPIAGDEAMVVRDEKKAREVALYRQGKFREGKLARKHSAKLENMFTNISEGGILELNIILKTDVQGSVEAINDALEQLSTEKAKVKIIGSGVGGITETDATLAAASNAILIGFNVRADASARRIIDKENLNIHYYSVIYHLINEVTQAMNGMLTPEYKQDIIGLAEVRNVFSVPKFGLIAGCMVIEGIVKRHNNIRVIRNNIIIYEGELYSLRRFKDDVNEVRNGMECGIGVKNYTDIRTGDIIEVFKLIPIIKSSN.

The interval 259–281 is disordered; that stretch reads KNREEARAVGRSSKSQSKRKSST. The region spanning 379 to 548 is the tr-type G domain; it reads SRAPVVTIMG…LLQAEVLELK (170 aa). Residues 388 to 395 are G1; sequence GHVDHGKT. GTP is bound at residue 388 to 395; sequence GHVDHGKT. The tract at residues 413–417 is G2; the sequence is GITQH. Residues 434 to 437 form a G3 region; sequence DTPG. GTP contacts are provided by residues 434 to 438 and 488 to 491; these read DTPGH and NKID. Positions 488–491 are G4; that stretch reads NKID. Residues 524–526 are G5; that stretch reads SAK.

This sequence belongs to the TRAFAC class translation factor GTPase superfamily. Classic translation factor GTPase family. IF-2 subfamily.

Its subcellular location is the cytoplasm. Its function is as follows. One of the essential components for the initiation of protein synthesis. Protects formylmethionyl-tRNA from spontaneous hydrolysis and promotes its binding to the 30S ribosomal subunits. Also involved in the hydrolysis of GTP during the formation of the 70S ribosomal complex. The protein is Translation initiation factor IF-2 of Baumannia cicadellinicola subsp. Homalodisca coagulata.